We begin with the raw amino-acid sequence, 568 residues long: 2-succinyl-5-enolpyruvyl-6-hydroxy-3-cyclohexene-1-carboxylate synthase (568 aa).

It belongs to the TPP enzyme family. MenD subfamily. As to quaternary structure, homodimer. Mg(2+) is required as a cofactor. Mn(2+) serves as cofactor. The cofactor is thiamine diphosphate.

It catalyses the reaction isochorismate + 2-oxoglutarate + H(+) = 5-enolpyruvoyl-6-hydroxy-2-succinyl-cyclohex-3-ene-1-carboxylate + CO2. It functions in the pathway quinol/quinone metabolism; 1,4-dihydroxy-2-naphthoate biosynthesis; 1,4-dihydroxy-2-naphthoate from chorismate: step 2/7. Its pathway is quinol/quinone metabolism; menaquinone biosynthesis. Functionally, catalyzes the thiamine diphosphate-dependent decarboxylation of 2-oxoglutarate and the subsequent addition of the resulting succinic semialdehyde-thiamine pyrophosphate anion to isochorismate to yield 2-succinyl-5-enolpyruvyl-6-hydroxy-3-cyclohexene-1-carboxylate (SEPHCHC). In Haemophilus influenzae (strain 86-028NP), this protein is 2-succinyl-5-enolpyruvyl-6-hydroxy-3-cyclohexene-1-carboxylate synthase.